The sequence spans 261 residues: UPF0246 protein Reut_A1014 (261 aa).

This sequence belongs to the UPF0246 family.

The polypeptide is UPF0246 protein Reut_A1014 (Cupriavidus pinatubonensis (strain JMP 134 / LMG 1197) (Cupriavidus necator (strain JMP 134))).